A 212-amino-acid polypeptide reads, in one-letter code: Methylthioribulose-1-phosphate dehydratase (212 aa).

Zn(2+)-binding residues include H97 and H99.

This sequence belongs to the aldolase class II family. MtnB subfamily. In terms of assembly, homotetramer. Requires Zn(2+) as cofactor.

The enzyme catalyses 5-(methylsulfanyl)-D-ribulose 1-phosphate = 5-methylsulfanyl-2,3-dioxopentyl phosphate + H2O. The protein operates within amino-acid biosynthesis; L-methionine biosynthesis via salvage pathway; L-methionine from S-methyl-5-thio-alpha-D-ribose 1-phosphate: step 2/6. Its function is as follows. Catalyzes the dehydration of methylthioribulose-1-phosphate (MTRu-1-P) into 2,3-diketo-5-methylthiopentyl-1-phosphate (DK-MTP-1-P). This chain is Methylthioribulose-1-phosphate dehydratase, found in Bacillus mycoides (strain KBAB4) (Bacillus weihenstephanensis).